A 242-amino-acid polypeptide reads, in one-letter code: Triosephosphate isomerase (242 aa).

Position 8–10 (8–10) interacts with substrate; sequence NWK. Catalysis depends on histidine 91, which acts as the Electrophile. Glutamate 155 functions as the Proton acceptor in the catalytic mechanism. Positions 161 and 192 each coordinate substrate.

The protein belongs to the triosephosphate isomerase family. In terms of assembly, homodimer.

The protein localises to the cytoplasm. The catalysed reaction is D-glyceraldehyde 3-phosphate = dihydroxyacetone phosphate. The protein operates within carbohydrate biosynthesis; gluconeogenesis. Its pathway is carbohydrate degradation; glycolysis; D-glyceraldehyde 3-phosphate from glycerone phosphate: step 1/1. Its function is as follows. Involved in the gluconeogenesis. Catalyzes stereospecifically the conversion of dihydroxyacetone phosphate (DHAP) to D-glyceraldehyde-3-phosphate (G3P). This chain is Triosephosphate isomerase, found in Wolbachia pipientis wMel.